Here is a 357-residue protein sequence, read N- to C-terminus: Sulfate/thiosulfate import ATP-binding protein CysA (357 aa).

One can recognise an ABC transporter domain in the interval 3 to 237 (IQIQGVSKQY…PASPFVYDFL (235 aa)). Residue 35-42 (GPSGSGKT) participates in ATP binding.

The protein belongs to the ABC transporter superfamily. Sulfate/tungstate importer (TC 3.A.1.6) family. The complex is composed of two ATP-binding proteins (CysA), two transmembrane proteins (CysT and CysW) and a solute-binding protein (CysP).

It is found in the cell membrane. It carries out the reaction sulfate(out) + ATP + H2O = sulfate(in) + ADP + phosphate + H(+). The enzyme catalyses thiosulfate(out) + ATP + H2O = thiosulfate(in) + ADP + phosphate + H(+). In terms of biological role, part of the ABC transporter complex CysAWTP involved in sulfate/thiosulfate import. Responsible for energy coupling to the transport system. In Bacillus cereus (strain ATCC 10987 / NRS 248), this protein is Sulfate/thiosulfate import ATP-binding protein CysA.